The following is a 501-amino-acid chain: Cytochrome P450 monooxygenase notH (501 aa).

Residues 11-31 traverse the membrane as a helical segment; the sequence is LGLESVGWVLGLLTTSILYLF. A glycan (N-linked (GlcNAc...) asparagine) is linked at asparagine 298. Cysteine 442 is a heme binding site.

The protein belongs to the cytochrome P450 family. Requires heme as cofactor.

The protein resides in the membrane. It participates in alkaloid biosynthesis. In terms of biological role, cytochrome P450 monooxygenase; part of the gene cluster that mediates the biosynthesis of notoamide, a fungal indole alkaloid that belongs to a family of natural products containing a characteristic bicyclo[2.2.2]diazaoctane core. The first step of notoamide biosynthesis involves coupling of L-proline and L-tryptophan by the bimodular NRPS notE, to produce cyclo-L-tryptophan-L-proline called brevianamide F. The reverse prenyltransferase notF then acts as a deoxybrevianamide E synthase and converts brevianamide F to deoxybrevianamide E via reverse prenylation at C-2 of the indole ring leading to the bicyclo[2.2.2]diazaoctane core. Deoxybrevianamide E is further hydroxylated at C-6 of the indole ring, likely catalyzed by the cytochrome P450 monooxygenase notG, to yield 6-hydroxy-deoxybrevianamide E. 6-hydroxy-deoxybrevianamide E is a specific substrate of the prenyltransferase notC for normal prenylation at C-7 to produce 6-hydroxy-7-prenyl-deoxybrevianamide, also called notoamide S. As the proposed pivotal branching point in notoamide biosynthesis, notoamide S can be diverted to notoamide E through an oxidative pyran ring closure putatively catalyzed by either notH cytochrome P450 monooxygenase or the notD FAD-linked oxidoreductase. This step would be followed by an indole 2,3-epoxidation-initiated pinacol-like rearrangement catalyzed by the notB FAD-dependent monooxygenase leading to the formation of notoamide C and notoamide D. On the other hand notoamide S is converted to notoamide T by notH (or notD), a bifunctional oxidase that also functions as the intramolecular Diels-Alderase responsible for generation of (+)-notoamide T. To generate antipodal (-)-notoaminide T, notH' (or notD') in Aspergillus versicolor is expected to catalyze a Diels-Alder reaction leading to the opposite stereochemistry. The remaining oxidoreductase notD (or notH) likely catalyzes the oxidative pyran ring formation to yield (+)-stephacidin A. The FAD-dependent monooxygenase notI is highly similar to notB and is predicted to catalyze a similar conversion from (+)-stephacidin A to (-)-notoamide B via the 2,3-epoxidation of (+)-stephacidin A followed by a pinacol-type rearrangement. Finally, it remains unclear which enzyme could be responsible for the final hydroxylation steps leading to notoamide A and sclerotiamide. The polypeptide is Cytochrome P450 monooxygenase notH (Aspergillus sp. (strain MF297-2)).